We begin with the raw amino-acid sequence, 157 residues long: uncharacterized protein (157 aa).

A helical transmembrane segment spans residues 42 to 64; that stretch reads SCIRLIVMFICVAMITCPNSLRF.

The protein localises to the membrane. This is an uncharacterized protein from Saccharomyces cerevisiae (strain ATCC 204508 / S288c) (Baker's yeast).